A 356-amino-acid chain; its full sequence is Protein RecA (356 aa).

Position 68–75 (68–75 (GQESSGKT)) interacts with ATP.

Belongs to the RecA family.

It is found in the cytoplasm. Can catalyze the hydrolysis of ATP in the presence of single-stranded DNA, the ATP-dependent uptake of single-stranded DNA by duplex DNA, and the ATP-dependent hybridization of homologous single-stranded DNAs. It interacts with LexA causing its activation and leading to its autocatalytic cleavage. The polypeptide is Protein RecA (Thermotoga sp. (strain RQ2)).